The sequence spans 448 residues: Homogentisate 1,2-dioxygenase (448 aa).

His-303 functions as the Proton acceptor in the catalytic mechanism. Residues His-346 and Glu-352 each contribute to the Fe cation site. Homogentisate-binding residues include Tyr-361 and His-382. His-382 is a Fe cation binding site.

The protein belongs to the homogentisate dioxygenase family. As to quaternary structure, hexamer; dimer of trimers. Fe cation serves as cofactor.

It carries out the reaction homogentisate + O2 = 4-maleylacetoacetate + H(+). The protein operates within amino-acid degradation; L-phenylalanine degradation; acetoacetate and fumarate from L-phenylalanine: step 4/6. Functionally, involved in the catabolism of homogentisate (2,5-dihydroxyphenylacetate or 2,5-OH-PhAc), a central intermediate in the degradation of phenylalanine and tyrosine. Catalyzes the oxidative ring cleavage of the aromatic ring of homogentisate to yield maleylacetoacetate. The sequence is that of Homogentisate 1,2-dioxygenase from Nitrobacter hamburgensis (strain DSM 10229 / NCIMB 13809 / X14).